The chain runs to 141 residues: Large ribosomal subunit protein uL22 (141 aa).

Belongs to the universal ribosomal protein uL22 family. Part of the 50S ribosomal subunit.

Its function is as follows. This protein binds specifically to 23S rRNA; its binding is stimulated by other ribosomal proteins, e.g. L4, L17, and L20. It is important during the early stages of 50S assembly. It makes multiple contacts with different domains of the 23S rRNA in the assembled 50S subunit and ribosome. Functionally, the globular domain of the protein is located near the polypeptide exit tunnel on the outside of the subunit, while an extended beta-hairpin is found that lines the wall of the exit tunnel in the center of the 70S ribosome. This Frankia casuarinae (strain DSM 45818 / CECT 9043 / HFP020203 / CcI3) protein is Large ribosomal subunit protein uL22.